Reading from the N-terminus, the 155-residue chain is Small ribosomal subunit protein uS8m (155 aa).

Belongs to the universal ribosomal protein uS8 family. As to quaternary structure, component of the mitochondrial small ribosomal subunit (mt-SSU). Mature yeast 74S mitochondrial ribosomes consist of a small (37S) and a large (54S) subunit. The 37S small subunit contains a 15S ribosomal RNA (15S mt-rRNA) and 34 different proteins. The 54S large subunit contains a 21S rRNA (21S mt-rRNA) and 46 different proteins.

It localises to the mitochondrion. Component of the mitochondrial ribosome (mitoribosome), a dedicated translation machinery responsible for the synthesis of mitochondrial genome-encoded proteins, including at least some of the essential transmembrane subunits of the mitochondrial respiratory chain. The mitoribosomes are attached to the mitochondrial inner membrane and translation products are cotranslationally integrated into the membrane. The chain is Small ribosomal subunit protein uS8m (MRPS8) from Saccharomyces cerevisiae (strain ATCC 204508 / S288c) (Baker's yeast).